Here is a 233-residue protein sequence, read N- to C-terminus: Large ribosomal subunit protein uL1 (233 aa).

Belongs to the universal ribosomal protein uL1 family. In terms of assembly, part of the 50S ribosomal subunit.

Binds directly to 23S rRNA. The L1 stalk is quite mobile in the ribosome, and is involved in E site tRNA release. Its function is as follows. Protein L1 is also a translational repressor protein, it controls the translation of the L11 operon by binding to its mRNA. This Vibrio cholerae serotype O1 (strain ATCC 39315 / El Tor Inaba N16961) protein is Large ribosomal subunit protein uL1.